The sequence spans 129 residues: MESKVEQGVKNLNMENDHQEKEEKEEKPQDASKRDPIVALPFEAGDYYVPRGGRRRFRVRQPIVHYRWDLMHRVGEPQGRMREENVQRFGDDVRQLMEKLRERQLSHSLRAVSTDPPHHDHHDEFCLMP.

Residues methionine 1–isoleucine 37 are disordered. A compositionally biased stretch (basic and acidic residues) spans glutamate 15–proline 36. Omega-N-methylarginine is present on arginine 51. The tract at residues histidine 118 to histidine 122 is his cluster. Cysteine 126 is a Zn(2+) binding site.

Belongs to the BEX family. As to quaternary structure, interacts with LMO2, possibly leading to regulate the transcriptional activity of a DNA-binding complex containing LMO2. Interacts with OMP. Primarily localized to neuronal cells within several regions of the brain, including the olfactory epithelium, bulb, peri/paraventricular nuclei, suprachiasmatic nucleus, arcuate nucleus, median eminence, lateral hypothalamic area, thalamus, hippocampus and cerebellum (at protein level).

It localises to the cytoplasm. The protein localises to the nucleus. Regulator of mitochondrial apoptosis and G1 cell cycle. Regulates the level of PP2A regulatory subunit B and PP2A phosphatase activity. In absence of reductive stress, acts as a pseudosubstrate for the CRL2(FEM1B) complex: associates with FEM1B via zinc, thereby preventing association between FEM1B and its substrates. This Mus musculus (Mouse) protein is Protein BEX2.